A 371-amino-acid chain; its full sequence is Chaperone protein DnaJ (371 aa).

Residues 5 to 69 form the J domain; the sequence is DYYEVLGLSK…QKRAQYDQFG (65 aa). A CR-type zinc finger spans residues 133–215; it reads GKELNVEIPV…CHGSSKVRKR (83 aa). Cysteine 146, cysteine 149, cysteine 163, cysteine 166, cysteine 189, cysteine 192, cysteine 203, and cysteine 206 together coordinate Zn(2+). 4 CXXCXGXG motif repeats span residues 146–153, 163–170, 189–196, and 203–210; these read CDTCKGSG, CKHCSGSG, CGHCSGTG, and CTTCHGSS.

It belongs to the DnaJ family. In terms of assembly, homodimer. The cofactor is Zn(2+).

It is found in the cytoplasm. In terms of biological role, participates actively in the response to hyperosmotic and heat shock by preventing the aggregation of stress-denatured proteins and by disaggregating proteins, also in an autonomous, DnaK-independent fashion. Unfolded proteins bind initially to DnaJ; upon interaction with the DnaJ-bound protein, DnaK hydrolyzes its bound ATP, resulting in the formation of a stable complex. GrpE releases ADP from DnaK; ATP binding to DnaK triggers the release of the substrate protein, thus completing the reaction cycle. Several rounds of ATP-dependent interactions between DnaJ, DnaK and GrpE are required for fully efficient folding. Also involved, together with DnaK and GrpE, in the DNA replication of plasmids through activation of initiation proteins. The sequence is that of Chaperone protein DnaJ from Bacillus cereus (strain ATCC 14579 / DSM 31 / CCUG 7414 / JCM 2152 / NBRC 15305 / NCIMB 9373 / NCTC 2599 / NRRL B-3711).